We begin with the raw amino-acid sequence, 153 residues long: NADPH-dependent 7-cyano-7-deazaguanine reductase (153 aa).

Cys51 serves as the catalytic Thioimide intermediate. The Proton donor role is filled by Asp58. Substrate-binding positions include 73 to 75 (VES) and 92 to 93 (HE).

It belongs to the GTP cyclohydrolase I family. QueF type 1 subfamily.

The protein resides in the cytoplasm. It catalyses the reaction 7-aminomethyl-7-carbaguanine + 2 NADP(+) = 7-cyano-7-deazaguanine + 2 NADPH + 3 H(+). It participates in tRNA modification; tRNA-queuosine biosynthesis. Functionally, catalyzes the NADPH-dependent reduction of 7-cyano-7-deazaguanine (preQ0) to 7-aminomethyl-7-deazaguanine (preQ1). The chain is NADPH-dependent 7-cyano-7-deazaguanine reductase from Granulibacter bethesdensis (strain ATCC BAA-1260 / CGDNIH1).